The primary structure comprises 312 residues: Olfactory receptor 2L2 (312 aa).

Topologically, residues 1 to 24 (MENYNQTSTDFILLGLFPQSRIGL) are extracellular. Asn-5 carries an N-linked (GlcNAc...) asparagine glycan. Residues 25-48 (FVFTLIFLIFLMALIGNLSMILLI) form a helical membrane-spanning segment. Topologically, residues 49-56 (FLDIHLHT) are cytoplasmic. The helical transmembrane segment at 57 to 78 (PMYFLLSQLSLIDLNYISTIVP) threads the bilayer. Over 79–99 (KMVYDFLYGNKSISFTGCGIQ) the chain is Extracellular. Residue Asn-88 is glycosylated (N-linked (GlcNAc...) asparagine). Cys-96 and Cys-188 form a disulfide bridge. The helical transmembrane segment at 100-119 (SFFFLTLAVAEGLLLTSMAY) threads the bilayer. Over 120–138 (DRYVAICFPLHYPIRISKR) the chain is Cytoplasmic. Residues 139–157 (VCVMMITGSWMISSINSCA) traverse the membrane as a helical segment. Residues 158-194 (HTVYALCIPYCKSRAINHFFCDVPAMLTLACTDTWVY) lie on the Extracellular side of the membrane. A helical transmembrane segment spans residues 195–218 (ESTVFLSSTIFLVLPFTGIACSYG). Residues 219–235 (RVLLAVYRMHSAEGRKK) lie on the Cytoplasmic side of the membrane. The chain crosses the membrane as a helical span at residues 236–258 (AYSTCSTHLTVVSFYYAPFAYTY). Residues 259 to 271 (VRPRSLRSPTEDK) are Extracellular-facing. The helical transmembrane segment at 272–291 (ILAVFYTILTPMLNPIIYSL) threads the bilayer. Over 292-312 (RNKEVMGALTQVIQKIFSVKM) the chain is Cytoplasmic.

It belongs to the G-protein coupled receptor 1 family.

The protein resides in the cell membrane. Odorant receptor. This chain is Olfactory receptor 2L2 (OR2L2), found in Homo sapiens (Human).